The chain runs to 70 residues: Putative membrane protein insertion efficiency factor (70 aa).

It belongs to the UPF0161 family.

It localises to the cell membrane. Could be involved in insertion of integral membrane proteins into the membrane. This Symbiobacterium thermophilum (strain DSM 24528 / JCM 14929 / IAM 14863 / T) protein is Putative membrane protein insertion efficiency factor.